Consider the following 82-residue polypeptide: Small ribosomal subunit protein bS16 (82 aa).

Belongs to the bacterial ribosomal protein bS16 family.

This chain is Small ribosomal subunit protein bS16, found in Shewanella sp. (strain ANA-3).